The chain runs to 496 residues: Pyrrole-2-carboxylic acid decarboxylase (496 aa).

Position 166 (Trp-166) interacts with K(+). The prenylated FMN site is built by Val-168, Arg-170, Gln-187, and His-188. His-188 contributes to the Mn(2+) binding site. K(+) contacts are provided by Ala-218, Ala-219, Met-221, and Glu-229. Glu-229 serves as a coordination point for prenylated FMN. Residue Glu-229 participates in Mn(2+) binding. The Proton donor role is filled by Glu-278. His-386 provides a ligand contact to prenylated FMN.

This sequence belongs to the UbiD family. UbiD-like/FDC subfamily. Homodimer. The cofactor is prenylated FMN. Mn(2+) is required as a cofactor. It depends on K(+) as a cofactor.

It carries out the reaction pyrrole-2-carboxylate + H(+) = 1H-pyrrole + CO2. The enzyme catalyses pyrrole-2-carboxylate + H2O = 1H-pyrrole + hydrogencarbonate. Its activity is regulated as follows. Imidazole acts as a reversible inhibitor via the formation of an imidazole-prenyl-FMN adduct. Activity is light sensitive. Catalyzes the prenyl-FMN-dependent decarboxylation of pyrrole-2-carboxylate (P2C). Can also catalyze the carboxylation of pyrrole in the presence of elevated concentrations of CO(2) or bicarbonate. Can accept a modest range of heteroaromatic compounds such as 3-methylpyrrole-2-carboxylate, indole-3-carboxylate and furan-2-carboxylate, and shows very low activity with thiophene-2-carboxylate. Attenuates the virulence of P.aeruginosa in a Drosophila model when overexpressed. This Pseudomonas aeruginosa (strain ATCC 15692 / DSM 22644 / CIP 104116 / JCM 14847 / LMG 12228 / 1C / PRS 101 / PAO1) protein is Pyrrole-2-carboxylic acid decarboxylase.